Consider the following 149-residue polypeptide: Cytochrome c-type biogenesis protein CcmE (149 aa).

Residues 1–7 (MKARHKR) are Cytoplasmic-facing. The helical; Signal-anchor for type II membrane protein transmembrane segment at 8–28 (LGLIVAGLAALGLGAALVLSA) threads the bilayer. The Periplasmic portion of the chain corresponds to 29–149 (FQKNLVFFFT…GAPALAGALK (121 aa)). Heme is bound by residues His123 and Tyr127.

The protein belongs to the CcmE/CycJ family.

It localises to the cell inner membrane. Its function is as follows. Heme chaperone required for the biogenesis of c-type cytochromes. Transiently binds heme delivered by CcmC and transfers the heme to apo-cytochromes in a process facilitated by CcmF and CcmH. The sequence is that of Cytochrome c-type biogenesis protein CcmE from Polaromonas naphthalenivorans (strain CJ2).